The chain runs to 383 residues: ATP phosphoribosyltransferase regulatory subunit (383 aa).

Belongs to the class-II aminoacyl-tRNA synthetase family. HisZ subfamily. In terms of assembly, heteromultimer composed of HisG and HisZ subunits.

It is found in the cytoplasm. Its pathway is amino-acid biosynthesis; L-histidine biosynthesis; L-histidine from 5-phospho-alpha-D-ribose 1-diphosphate: step 1/9. Functionally, required for the first step of histidine biosynthesis. May allow the feedback regulation of ATP phosphoribosyltransferase activity by histidine. The protein is ATP phosphoribosyltransferase regulatory subunit of Neisseria meningitidis serogroup C / serotype 2a (strain ATCC 700532 / DSM 15464 / FAM18).